Reading from the N-terminus, the 99-residue chain is DNA-binding protein Fis (99 aa).

The segment at residues Gln75–Lys94 is a DNA-binding region (H-T-H motif).

It belongs to the transcriptional regulatory Fis family. Homodimer.

Its function is as follows. Activates ribosomal RNA transcription. Plays a direct role in upstream activation of rRNA promoters. The chain is DNA-binding protein Fis from Buchnera aphidicola subsp. Schizaphis graminum (strain Sg).